The chain runs to 156 residues: ATP synthase subunit b (156 aa).

The helical transmembrane segment at 11–31 threads the bilayer; the sequence is LIAFALFVWFCMKFVWPPIIN.

Belongs to the ATPase B chain family. In terms of assembly, F-type ATPases have 2 components, F(1) - the catalytic core - and F(0) - the membrane proton channel. F(1) has five subunits: alpha(3), beta(3), gamma(1), delta(1), epsilon(1). F(0) has three main subunits: a(1), b(2) and c(10-14). The alpha and beta chains form an alternating ring which encloses part of the gamma chain. F(1) is attached to F(0) by a central stalk formed by the gamma and epsilon chains, while a peripheral stalk is formed by the delta and b chains.

Its subcellular location is the cell inner membrane. F(1)F(0) ATP synthase produces ATP from ADP in the presence of a proton or sodium gradient. F-type ATPases consist of two structural domains, F(1) containing the extramembraneous catalytic core and F(0) containing the membrane proton channel, linked together by a central stalk and a peripheral stalk. During catalysis, ATP synthesis in the catalytic domain of F(1) is coupled via a rotary mechanism of the central stalk subunits to proton translocation. In terms of biological role, component of the F(0) channel, it forms part of the peripheral stalk, linking F(1) to F(0). This is ATP synthase subunit b from Haemophilus influenzae (strain 86-028NP).